A 290-amino-acid chain; its full sequence is 4-hydroxy-tetrahydrodipicolinate synthase (290 aa).

Thr44 lines the pyruvate pocket. Tyr131 serves as the catalytic Proton donor/acceptor. Lys159 functions as the Schiff-base intermediate with substrate in the catalytic mechanism. Residue Ile201 participates in pyruvate binding.

It belongs to the DapA family. As to quaternary structure, homotetramer; dimer of dimers.

The protein resides in the cytoplasm. It carries out the reaction L-aspartate 4-semialdehyde + pyruvate = (2S,4S)-4-hydroxy-2,3,4,5-tetrahydrodipicolinate + H2O + H(+). It participates in amino-acid biosynthesis; L-lysine biosynthesis via DAP pathway; (S)-tetrahydrodipicolinate from L-aspartate: step 3/4. Its function is as follows. Catalyzes the condensation of (S)-aspartate-beta-semialdehyde [(S)-ASA] and pyruvate to 4-hydroxy-tetrahydrodipicolinate (HTPA). This chain is 4-hydroxy-tetrahydrodipicolinate synthase, found in Jannaschia sp. (strain CCS1).